The primary structure comprises 251 residues: Imidazole glycerol phosphate synthase subunit HisF (251 aa).

Active-site residues include D11 and D130.

It belongs to the HisA/HisF family. In terms of assembly, heterodimer of HisH and HisF.

Its subcellular location is the cytoplasm. The enzyme catalyses 5-[(5-phospho-1-deoxy-D-ribulos-1-ylimino)methylamino]-1-(5-phospho-beta-D-ribosyl)imidazole-4-carboxamide + L-glutamine = D-erythro-1-(imidazol-4-yl)glycerol 3-phosphate + 5-amino-1-(5-phospho-beta-D-ribosyl)imidazole-4-carboxamide + L-glutamate + H(+). The protein operates within amino-acid biosynthesis; L-histidine biosynthesis; L-histidine from 5-phospho-alpha-D-ribose 1-diphosphate: step 5/9. Its function is as follows. IGPS catalyzes the conversion of PRFAR and glutamine to IGP, AICAR and glutamate. The HisF subunit catalyzes the cyclization activity that produces IGP and AICAR from PRFAR using the ammonia provided by the HisH subunit. This chain is Imidazole glycerol phosphate synthase subunit HisF, found in Chlorobium phaeovibrioides (strain DSM 265 / 1930) (Prosthecochloris vibrioformis (strain DSM 265)).